The following is a 217-amino-acid chain: MSRAVRTLALGGLVLVGLSACVSVPRGQGSGAAVADHVSDSARQAEAARQAWLQAHPNWSFQGRVAISKDRNGGSGRIDWQQDGPRYRVQLSAPVTRQSWVLTGDTTSGAGRLEGLDGGPRSGPDAEQVLLEATGWTIPVNQMPDWVRALRIADAGAARVDLDAAGRPRTAQQDGWTIEFLAWTPAGADQPELPQRIEARNGEAKVRLLVDQWTVSP.

Positions 1 to 20 are cleaved as a signal peptide; sequence MSRAVRTLALGGLVLVGLSA. Cysteine 21 carries the N-palmitoyl cysteine lipid modification. Residue cysteine 21 is the site of S-diacylglycerol cysteine attachment.

The protein belongs to the LolB family. As to quaternary structure, monomer.

It is found in the cell outer membrane. Functionally, plays a critical role in the incorporation of lipoproteins in the outer membrane after they are released by the LolA protein. The protein is Outer-membrane lipoprotein LolB of Xanthomonas euvesicatoria pv. vesicatoria (strain 85-10) (Xanthomonas campestris pv. vesicatoria).